The following is an 899-amino-acid chain: Calcium-transporting ATPase 1 (899 aa).

The next 4 membrane-spanning stretches (helical) occupy residues 59-79 (FVKDPLILLLFASSAISVTLG), 80-100 (NIDDAISIALAIVIVVTVGFV), 247-267 (QLSLISLIGIAVIVLVGFFQG), and 282-302 (VAAIPEGLPIIVTVTLALGVL). Residue D329 is the 4-aspartylphosphate intermediate of the active site. The next 4 helical transmembrane spans lie at 688–708 (FQLSTSVAALSLIAISSVFGF), 757–777 (QLLQRVLLSAFIIVTVTIVVF), 827–847 (FNIAVGGSLIGQALVVYASPF), and 854–874 (EAIGLKDVLILLACTSSVLWV). A Phosphoserine modification is found at S892.

Belongs to the cation transport ATPase (P-type) (TC 3.A.3) family.

It localises to the endoplasmic reticulum membrane. The enzyme catalyses Ca(2+)(in) + ATP + H2O = Ca(2+)(out) + ADP + phosphate + H(+). Its function is as follows. Transports calcium and manganese ions into the cell. Regulates cell morphogenesis through control of manganese and calcium homeostasis. The protein is Calcium-transporting ATPase 1 (pmr1) of Schizosaccharomyces pombe (strain 972 / ATCC 24843) (Fission yeast).